The sequence spans 999 residues: Sarcoplasmic/endoplasmic reticulum calcium ATPase 3 (999 aa).

Topologically, residues 1 to 48 are cytoplasmic; it reads MEAAHSVPVQDVLSRFGVAESCGLSPEQVRRNREKYGPNELPAEERKS. The chain crosses the membrane as a helical span at residues 49–69; the sequence is LWELVLEQFEDLLVRILLMAA. Topologically, residues 70–89 are lumenal; sequence FLSFILAWFEEGEESTTAFV. Residues 90-110 traverse the membrane as a helical segment; the sequence is EPIVIIMILIANAVVGVWQER. Residues 111–253 are Cytoplasmic-facing; that stretch reads NAESAIEALK…PEKTPLQQKL (143 aa). Residues 254 to 273 traverse the membrane as a helical segment; sequence DEFSQQLSKVIFLVCIAVWV. Residues 274–295 are Lumenal-facing; that stretch reads INISHFSDPVHGGSWFRGAIYY. A helical transmembrane segment spans residues 296 to 313; it reads FKTSVALAVAAIPEGLPA. 4 residues coordinate Ca(2+): valine 304, alanine 305, isoleucine 307, and glutamate 309. At 314-757 the chain is on the cytoplasmic side; sequence VITTCLALGT…EEGRAIYNNM (444 aa). The active-site 4-aspartylphosphate intermediate is the aspartate 351. Positions 351 and 353 each coordinate Mg(2+). Threonine 353 serves as a coordination point for ATP. The interaction with phospholamban 1 stretch occupies residues 370 to 400; it reads EKVEGTQCSLHEFSITGSTYAPEGQILKDEK. Glutamate 442, arginine 489, lysine 515, arginine 560, threonine 625, glycine 626, aspartate 627, arginine 678, and lysine 684 together coordinate ATP. Aspartate 703 contacts Mg(2+). Position 706 (asparagine 706) interacts with ATP. The chain crosses the membrane as a helical span at residues 758–777; the sequence is KQFIRYLISSNVGEVVCIFL. 2 residues coordinate Ca(2+): asparagine 768 and glutamate 771. The Lumenal segment spans residues 778-787; the sequence is TAILGLPEAL. Residues 788 to 808 traverse the membrane as a helical segment; the sequence is IPVQLLWVNLVTDGLPATALG. Residues 788 to 808 form an interaction with phospholamban 2 region; sequence IPVQLLWVNLVTDGLPATALG. Residues asparagine 796, threonine 799, and aspartate 800 each contribute to the Ca(2+) site. At 809 to 828 the chain is on the cytoplasmic side; that stretch reads FNPPDLDIMDKLPRNPKEPL. The helical transmembrane segment at 829–851 threads the bilayer; it reads ISGWLFFRYLAIGVYVGLATVGA. Topologically, residues 852 to 897 are lumenal; sequence ATWWFLYDAEGPQVSFHQLRNFMRCTEDNPIFEGVNCEIFESRYPT. Residues 898–917 traverse the membrane as a helical segment; it reads TMALSVLVTIEMCNALNSVS. A Ca(2+)-binding site is contributed by glutamate 908. Residues 918-930 are Cytoplasmic-facing; the sequence is ENQSLLRMPPWLN. Residues 931-949 form a helical membrane-spanning segment; the sequence is IWLLGAIVMSMALHFFILY. Topologically, residues 950-964 are lumenal; the sequence is VKPMPLIFQVTPLSW. A helical transmembrane segment spans residues 965-985; sequence PQWVVVLKISLPVILLDEGLK. The Cytoplasmic segment spans residues 986–999; sequence YLSRNHLEGEEDKK.

Belongs to the cation transport ATPase (P-type) (TC 3.A.3) family. Type IIA subfamily. As to quaternary structure, interacts with sarcolipin (SLN). Interacts with phospholamban (PLN). Interacts with myoregulin (MRLN). Interacts with DWORF. The cofactor is Mg(2+). Found in spleen, lung, intestine and brain.

It is found in the endoplasmic reticulum membrane. The protein localises to the sarcoplasmic reticulum membrane. It catalyses the reaction Ca(2+)(in) + ATP + H2O = Ca(2+)(out) + ADP + phosphate + H(+). Inhibited by sarcolipin (SLN), phospholamban (PLN) and myoregulin (MRLN). Enhanced by DWORF; DWORF increases activity by displacing sarcolipin (SLN), phospholamban (PLN) and myoregulin (MRLN). Its function is as follows. This magnesium-dependent enzyme catalyzes the hydrolysis of ATP coupled with the transport of calcium. Transports calcium ions from the cytosol into the sarcoplasmic/endoplasmic reticulum lumen. Contributes to calcium sequestration involved in muscular excitation/contraction. The polypeptide is Sarcoplasmic/endoplasmic reticulum calcium ATPase 3 (ATP2A3) (Gallus gallus (Chicken)).